The following is a 329-amino-acid chain: Glycerol-3-phosphate dehydrogenase [NAD(P)+] (329 aa).

Residues S13, W14, H34, and K105 each coordinate NADPH. Sn-glycerol 3-phosphate is bound by residues K105, G134, and S136. NADPH is bound at residue A138. The sn-glycerol 3-phosphate site is built by K189, D242, S252, R253, and N254. K189 acts as the Proton acceptor in catalysis. NADPH is bound at residue R253. The NADPH site is built by V277 and E279.

This sequence belongs to the NAD-dependent glycerol-3-phosphate dehydrogenase family.

The protein localises to the cytoplasm. It catalyses the reaction sn-glycerol 3-phosphate + NAD(+) = dihydroxyacetone phosphate + NADH + H(+). It carries out the reaction sn-glycerol 3-phosphate + NADP(+) = dihydroxyacetone phosphate + NADPH + H(+). The protein operates within membrane lipid metabolism; glycerophospholipid metabolism. Catalyzes the reduction of the glycolytic intermediate dihydroxyacetone phosphate (DHAP) to sn-glycerol 3-phosphate (G3P), the key precursor for phospholipid synthesis. The polypeptide is Glycerol-3-phosphate dehydrogenase [NAD(P)+] (Legionella pneumophila (strain Lens)).